A 662-amino-acid chain; its full sequence is F-box/WD repeat-containing protein pof10 (662 aa).

The span at 1 to 16 shows a compositional bias: polar residues; sequence MKSEPTSLDFTSSNLR. Positions 1–27 are disordered; that stretch reads MKSEPTSLDFTSSNLRRMNRDHSSNNT. Residues 28 to 74 form the F-box domain; sequence NRTVLNLPKEILIIIFSFLDPRSLLSAQCTCKYWKKLLSDDLSWRTA. 3 WD repeats span residues 215-260, 263-302, and 429-468; these read SHAD…SLQS, FRSS…GYAR, and TAYS…FLKK. The 20-residue stretch at 581 to 600 folds into the UIM 1 domain; it reads SEEEIIAYVTMLSQEEEAKR. Residues 617-645 form a disordered region; that stretch reads ENDEQATSSLNALSSNHEPPQEQANVAEL. The span at 621 to 640 shows a compositional bias: polar residues; that stretch reads QATSSLNALSSNHEPPQEQA. The region spanning 646–662 is the UIM 2 domain; the sequence is NEQEQIELAMRLSLMEM.

In terms of assembly, part of a SCF (SKP1-cullin-F-box) protein ligase complex. Interacts with skp1.

Its subcellular location is the cytoplasm. In terms of biological role, probably recognizes and binds to some phosphorylated proteins and promotes their ubiquitination and degradation. The polypeptide is F-box/WD repeat-containing protein pof10 (pof10) (Schizosaccharomyces pombe (strain 972 / ATCC 24843) (Fission yeast)).